We begin with the raw amino-acid sequence, 1018 residues long: Putative type I restriction enzyme MjaVIIIP endonuclease subunit (1018 aa).

The protein belongs to the HsdR family. As to quaternary structure, the type I restriction/modification system is composed of three polypeptides R, M and S.

The catalysed reaction is Endonucleolytic cleavage of DNA to give random double-stranded fragments with terminal 5'-phosphates, ATP is simultaneously hydrolyzed.. Its function is as follows. The restriction (R) subunit of a type I restriction enzyme that recognizes 5'-GAYN(5)GTAA-3' and cleaves a random distance away. The R subunit is required for both endonuclease and ATPase activities but not for modification. After locating a non-methylated recognition site, the enzyme complex serves as a molecular motor that translocates DNA in an ATP-dependent manner until a collision occurs that triggers cleavage. The protein is Putative type I restriction enzyme MjaVIIIP endonuclease subunit of Methanocaldococcus jannaschii (strain ATCC 43067 / DSM 2661 / JAL-1 / JCM 10045 / NBRC 100440) (Methanococcus jannaschii).